The primary structure comprises 886 residues: Peptidyl-lysine N-acetyltransferase Pat (886 aa).

The ATP-grasp domain occupies 487 to 523; the sequence is QPILHAYGLHTLPTWIASDSAEAVHIAEQIGYPVALK. Residue 513 to 524 coordinates ATP; that stretch reads AEQIGYPVALKL. The N-acetyltransferase domain maps to 726 to 881; that stretch reads CLFRPILPED…GIVGLTLNLA (156 aa).

The protein in the N-terminal section; belongs to the acetate CoA ligase alpha subunit family. It in the central section; belongs to the acetate CoA ligase beta subunit family. As to quaternary structure, monomer in the absence of acetyl-CoA. Oligomerizes to a tetrameric form in the presence of acetyl-CoA.

It carries out the reaction L-lysyl-[protein] + acetyl-CoA = N(6)-acetyl-L-lysyl-[protein] + CoA + H(+). Exhibits positive cooperativity. It may be the result of acetyl-CoA binding to two distinct sites, or the result of subunit interactions. Functionally, acetylates and inactivates the acetyl-CoA synthase (Acs). Can also acetylate other central metabolic enzymes in response to environmental changes. In Salmonella typhimurium (strain LT2 / SGSC1412 / ATCC 700720), this protein is Peptidyl-lysine N-acetyltransferase Pat (pat).